We begin with the raw amino-acid sequence, 78 residues long: CDC42 small effector protein 1 (78 aa).

S-palmitoyl cysteine attachment occurs at residues C10 and C11. Positions 30-43 (IGEPMNFVHLTHIG) constitute a CRIB domain.

This sequence belongs to the CDC42SE/SPEC family.

The protein resides in the cytoplasm. The protein localises to the cytoskeleton. It is found in the cell membrane. Functionally, probably involved in the organization of the actin cytoskeleton by acting downstream of CDC42, inducing actin filament assembly. This Gallus gallus (Chicken) protein is CDC42 small effector protein 1 (CDC42SE1).